Consider the following 541-residue polypeptide: Tyrosine-protein kinase Yes (541 aa).

Basic and acidic residues predominate over residues 1–10 (MGCIKSKENK). The segment at 1-29 (MGCIKSKENKSPAIKYTPENPTEPVNTSA) is disordered. A lipid anchor (N-myristoyl glycine) is attached at Gly2. Cys3 carries the S-palmitoyl cysteine; in membrane form lipid modification. The segment covering 19-29 (ENPTEPVNTSA) has biased composition (polar residues). Tyr32 carries the phosphotyrosine modification. The 62-residue stretch at 89 to 150 (GGVTIFVALY…PSNYVAPADS (62 aa)) folds into the SH3 domain. Residues 156-253 (WYFGKMGRKD…GLCHKLTTVC (98 aa)) form the SH2 domain. The Protein kinase domain occupies 275-528 (LRLEVKLGQG…YIQSFLEDYF (254 aa)). Residues 281 to 289 (LGQGCFGEV) and Lys303 each bind ATP. Residues Tyr334 and Tyr343 each carry the phosphotyrosine modification. Asp394 acts as the Proton acceptor in catalysis. At Tyr424 the chain carries Phosphotyrosine; by autocatalysis. The residue at position 535 (Tyr535) is a Phosphotyrosine.

Interacts with YAP1 and CSF1R. Interacts with FASLG. Interacts with CTNND1; this interaction allows YES1-mediated activation of FYN and FER and subsequent phosphorylation of CTNND1. Interacts with IL6ST/gp130. Interacts with SCRIB, when YES1 is in a closed conformation; the interaction facilitates YES1 autophosphorylation. Phosphorylated. Phosphorylation by CSK on the C-terminal tail maintains the enzyme in an inactive state. Autophosphorylation at Tyr-424 maintains enzyme activity by blocking CSK-mediated inhibition. Post-translationally, palmitoylation at Cys-3 promotes membrane localization.

The protein localises to the cell membrane. The protein resides in the cytoplasm. It localises to the cytoskeleton. Its subcellular location is the microtubule organizing center. It is found in the centrosome. The protein localises to the cytosol. The protein resides in the cell junction. It carries out the reaction L-tyrosyl-[protein] + ATP = O-phospho-L-tyrosyl-[protein] + ADP + H(+). Functionally, non-receptor protein tyrosine kinase that is involved in the regulation of cell growth and survival, apoptosis, cell-cell adhesion, cytoskeleton remodeling, and differentiation. Stimulation by receptor tyrosine kinases (RTKs) including EGFR, PDGFR, CSF1R and FGFR leads to recruitment of YES1 to the phosphorylated receptor, and activation and phosphorylation of downstream substrates. Upon EGFR activation, promotes the phosphorylation of PARD3 to favor epithelial tight junction assembly. Participates in the phosphorylation of specific junctional components such as CTNND1 by stimulating the FYN and FER tyrosine kinases at cell-cell contacts. Upon T-cell stimulation by CXCL12, phosphorylates collapsin response mediator protein 2/DPYSL2 and induces T-cell migration. Participates in CD95L/FASLG signaling pathway and mediates AKT-mediated cell migration. Plays a role in cell cycle progression by phosphorylating the cyclin dependent kinase 4/CDK4 thus regulating the G1 phase. Also involved in G2/M progression and cytokinesis. Catalyzes phosphorylation of organic cation transporter OCT2 which induces its transport activity. This is Tyrosine-protein kinase Yes (Yes1) from Rattus norvegicus (Rat).